The primary structure comprises 671 residues: DNA ligase (671 aa).

Residues 32-36 (DAEYD), 81-82 (SL), and Glu-113 each bind NAD(+). Residue Lys-115 is the N6-AMP-lysine intermediate of the active site. Residues Arg-136, Glu-173, Lys-290, and Lys-314 each contribute to the NAD(+) site. Zn(2+) contacts are provided by Cys-408, Cys-411, Cys-426, and Cys-432. In terms of domain architecture, BRCT spans 593 to 671 (EIDSPFAGKT…EAEMLRLLGS (79 aa)).

This sequence belongs to the NAD-dependent DNA ligase family. LigA subfamily. It depends on Mg(2+) as a cofactor. Mn(2+) is required as a cofactor.

It carries out the reaction NAD(+) + (deoxyribonucleotide)n-3'-hydroxyl + 5'-phospho-(deoxyribonucleotide)m = (deoxyribonucleotide)n+m + AMP + beta-nicotinamide D-nucleotide.. DNA ligase that catalyzes the formation of phosphodiester linkages between 5'-phosphoryl and 3'-hydroxyl groups in double-stranded DNA using NAD as a coenzyme and as the energy source for the reaction. It is essential for DNA replication and repair of damaged DNA. The protein is DNA ligase of Shigella boydii serotype 4 (strain Sb227).